A 289-amino-acid polypeptide reads, in one-letter code: Geranylgeranyl diphosphate synthase (289 aa).

Isopentenyl diphosphate-binding residues include Arg43 and His73. Asp80 and Asp86 together coordinate Mg(2+). Arg91 serves as a coordination point for (2E,6E)-farnesyl diphosphate. Isopentenyl diphosphate is bound at residue Arg92. (2E,6E)-farnesyl diphosphate contacts are provided by Lys170, Thr171, and Gln205.

Belongs to the FPP/GGPP synthase family. Mg(2+) serves as cofactor.

The enzyme catalyses isopentenyl diphosphate + (2E,6E)-farnesyl diphosphate = (2E,6E,10E)-geranylgeranyl diphosphate + diphosphate. It functions in the pathway isoprenoid biosynthesis; geranylgeranyl diphosphate biosynthesis; geranylgeranyl diphosphate from farnesyl diphosphate and isopentenyl diphosphate: step 1/1. Catalyzes the condensation of farnesyl diphosphate (FPP) and isopentenyl diphosphate (IPP) to yield geranylgeranyl diphosphate (GGPP) needed for biosynthesis of carotenoids and diterpenes. The polypeptide is Geranylgeranyl diphosphate synthase (crtE) (Rhodobacter capsulatus (strain ATCC BAA-309 / NBRC 16581 / SB1003)).